Here is a 392-residue protein sequence, read N- to C-terminus: MPYRAELKRPDLKGSFPCSICQKVFCHSSSLSRHRMQAHFKSYTCTTCNNEIPSNDTLRSHMYRVHNITRMFMCRCCNWAFPDKTSLHIHMQSMLKNGTPGEAAVLAKSSDVVDSTSESGSPRQSPPFSPDLLMQKRMLQVAANNNNIGSIFPTLLKSPDSKSMFPLDLSNMGPSQFLSAWLANNPINTAALNLAAQQTPSKDSIQSSNISDYDDLEVQTTEEDIKFEVESSDVSPRSVIVKTEPTFKRELEHDADIDVEGDDGEPPLKMTIDDKNIHISHDQPSPTVSDSHISGGSSSHSGESLKCFDCQVARGKLVAVEDKCRAYEKTIRELQVQVDFLRKIQPNPMPPVMLPPPMMPMPSPGPNNLFQNPAMRMLLNNLIHMNRPSVVP.

C2H2-type zinc fingers lie at residues 16-39 (FPCS…MQAH) and 43-66 (YTCT…YRVH). The C2H2-type 3; degenerate zinc-finger motif lies at 72-95 (FMCRCCNWAFPDKTSLHIHMQSML). Disordered regions lie at residues 106–130 (LAKS…PFSP) and 278–303 (HISH…HSGE). Positions 112-123 (VVDSTSESGSPR) are enriched in polar residues. Over residues 289 to 303 (SDSHISGGSSSHSGE) the composition is skewed to low complexity.

It localises to the nucleus. Probable transcription factor that acts downstream of egl-15, to promote migration of the HSN motor neurons from the tail to the gonad primordium during HSN cell differentiation. In Caenorhabditis elegans, this protein is Zinc finger protein ham-2.